A 392-amino-acid chain; its full sequence is Acetyl-CoA acetyltransferase (392 aa).

Cys-89 acts as the Acyl-thioester intermediate in catalysis. Residues His-348 and Cys-378 each act as proton acceptor in the active site.

It belongs to the thiolase-like superfamily. Thiolase family. Homotetramer.

It localises to the cytoplasm. It catalyses the reaction 2 acetyl-CoA = acetoacetyl-CoA + CoA. Its pathway is biopolymer metabolism; poly-(R)-3-hydroxybutanoate biosynthesis. The protein operates within metabolic intermediate biosynthesis; (R)-mevalonate biosynthesis; (R)-mevalonate from acetyl-CoA: step 1/3. In Shinella zoogloeoides (Crabtreella saccharophila), this protein is Acetyl-CoA acetyltransferase.